A 344-amino-acid chain; its full sequence is Phosphate acyltransferase (344 aa).

Belongs to the PlsX family. As to quaternary structure, homodimer. Probably interacts with PlsY.

The protein localises to the cytoplasm. It carries out the reaction a fatty acyl-[ACP] + phosphate = an acyl phosphate + holo-[ACP]. Its pathway is lipid metabolism; phospholipid metabolism. In terms of biological role, catalyzes the reversible formation of acyl-phosphate (acyl-PO(4)) from acyl-[acyl-carrier-protein] (acyl-ACP). This enzyme utilizes acyl-ACP as fatty acyl donor, but not acyl-CoA. This chain is Phosphate acyltransferase, found in Sphingopyxis alaskensis (strain DSM 13593 / LMG 18877 / RB2256) (Sphingomonas alaskensis).